We begin with the raw amino-acid sequence, 218 residues long: Large ribosomal subunit protein bL25 (218 aa).

The segment at 185–218 (ARAAEEEAPAAEETTAEPELVRERREPRAEEEEE) is disordered. Over residues 190–200 (EEAPAAEETTA) the composition is skewed to acidic residues. The segment covering 203–212 (ELVRERREPR) has biased composition (basic and acidic residues).

Belongs to the bacterial ribosomal protein bL25 family. CTC subfamily. In terms of assembly, part of the 50S ribosomal subunit; part of the 5S rRNA/L5/L18/L25 subcomplex. Contacts the 5S rRNA. Binds to the 5S rRNA independently of L5 and L18.

In terms of biological role, this is one of the proteins that binds to the 5S RNA in the ribosome where it forms part of the central protuberance. This chain is Large ribosomal subunit protein bL25, found in Roseiflexus castenholzii (strain DSM 13941 / HLO8).